Consider the following 302-residue polypeptide: MEQKRLTHLRQLEAESIHIIREVAAEFANPVMLYSIGKDSSVMLHLARKAFYPGTLPFPLLHVDTGWKFREMYAFRDRTANAYGCELLVHKNPEGVAMGINPFVHGSAKHTDIMKTEGLKQALNKYGFDAAFGGARRDEEKSRAKERIYSFRDRFHRWDPKNQRPELWRNYNGQINKGESIRVFPLSNWTEQDIWQYIWLENIDIVPLYLAAERPVLERDGMLMMVDDDRIDLQPGEVIKKRMVRFRTLGCWPLTGAVESHAQTLPEIIEEMLVSTTSERQGRMIDRDQAGSMELKKRQGYF.

Belongs to the PAPS reductase family. CysD subfamily. As to quaternary structure, heterodimer composed of CysD, the smaller subunit, and CysN.

The enzyme catalyses sulfate + ATP + H(+) = adenosine 5'-phosphosulfate + diphosphate. The protein operates within sulfur metabolism; hydrogen sulfide biosynthesis; sulfite from sulfate: step 1/3. With CysN forms the ATP sulfurylase (ATPS) that catalyzes the adenylation of sulfate producing adenosine 5'-phosphosulfate (APS) and diphosphate, the first enzymatic step in sulfur assimilation pathway. APS synthesis involves the formation of a high-energy phosphoric-sulfuric acid anhydride bond driven by GTP hydrolysis by CysN coupled to ATP hydrolysis by CysD. This chain is Sulfate adenylyltransferase subunit 2, found in Salmonella schwarzengrund (strain CVM19633).